The chain runs to 383 residues: S-adenosylmethionine synthase (383 aa).

Residue histidine 15 coordinates ATP. Aspartate 17 is a Mg(2+) binding site. K(+) is bound at residue glutamate 43. Positions 56 and 99 each coordinate L-methionine. The interval 99–109 (QSPDINQGVDR) is flexible loop. Residues 164–166 (DAK), 230–231 (RF), aspartate 239, 245–246 (RK), alanine 262, and lysine 266 contribute to the ATP site. Aspartate 239 is a binding site for L-methionine. Position 270 (lysine 270) interacts with L-methionine.

Belongs to the AdoMet synthase family. In terms of assembly, homotetramer; dimer of dimers. Requires Mg(2+) as cofactor. K(+) serves as cofactor.

The protein localises to the cytoplasm. It carries out the reaction L-methionine + ATP + H2O = S-adenosyl-L-methionine + phosphate + diphosphate. Its pathway is amino-acid biosynthesis; S-adenosyl-L-methionine biosynthesis; S-adenosyl-L-methionine from L-methionine: step 1/1. In terms of biological role, catalyzes the formation of S-adenosylmethionine (AdoMet) from methionine and ATP. The overall synthetic reaction is composed of two sequential steps, AdoMet formation and the subsequent tripolyphosphate hydrolysis which occurs prior to release of AdoMet from the enzyme. The protein is S-adenosylmethionine synthase of Shewanella sp. (strain W3-18-1).